The primary structure comprises 471 residues: Mitochondrial distribution and morphology protein 10 (471 aa).

Residues 429–455 (PSSFSSPSRAANSTPAGGGQSVGGGIS) form a disordered region. Residues 444-455 (AGGGQSVGGGIS) are compositionally biased toward gly residues.

It belongs to the MDM10 family. As to quaternary structure, component of the ER-mitochondria encounter structure (ERMES) or MDM complex, composed of mmm1, mdm10, mdm12 and mdm34. Associates with the mitochondrial outer membrane sorting assembly machinery SAM(core) complex.

Its subcellular location is the mitochondrion outer membrane. In terms of biological role, component of the ERMES/MDM complex, which serves as a molecular tether to connect the endoplasmic reticulum and mitochondria. Components of this complex are involved in the control of mitochondrial shape and protein biogenesis and may function in phospholipid exchange. mdm10 is involved in the late assembly steps of the general translocase of the mitochondrial outer membrane (TOM complex). Functions in the tom40-specific route of the assembly of outer membrane beta-barrel proteins, including the association of tom40 with the receptor tom22 and small TOM proteins. Can associate with the SAM(core) complex as well as the mdm12-mmm1 complex, both involved in late steps of the major beta-barrel assembly pathway, that is responsible for biogenesis of all outer membrane beta-barrel proteins. May act as a switch that shuttles between both complexes and channels precursor proteins into the tom40-specific pathway. Plays a role in mitochondrial morphology and in the inheritance of mitochondria. The chain is Mitochondrial distribution and morphology protein 10 (mdmB) from Aspergillus fumigatus (strain ATCC MYA-4609 / CBS 101355 / FGSC A1100 / Af293) (Neosartorya fumigata).